Reading from the N-terminus, the 546-residue chain is Calcitonin receptor-like protein 1 (546 aa).

At 1–171 the chain is on the cytoplasmic side; that stretch reads MADATSPFNV…EVARNARKLE (171 aa). The helical transmembrane segment at 172-192 threads the bilayer; it reads FVGLGLSLVSLILAISIFSYF. The Extracellular portion of the chain corresponds to 193–205; it reads RRLRVFRNLLHLH. Residues 206 to 226 traverse the membrane as a helical segment; the sequence is LMIAMLMVVILRLVLYIDLIF. Residues 227–251 are Cytoplasmic-facing; it reads TGENGPHTNSAEGKTINTMPIVCEG. A helical transmembrane segment spans residues 252–272; sequence MFFFLEYFKTVTFCWMFLEGI. At 273 to 292 the chain is on the extracellular side; the sequence is YLNNQIVFGFFNSEPKLLPY. Residues 293-313 traverse the membrane as a helical segment; sequence FIAGYGIPLVHTMLWLLVVLI. Residues 314–333 lie on the Cytoplasmic side of the membrane; it reads KKDFKVERCLGSYYLEPEFW. Residues 334-354 traverse the membrane as a helical segment; it reads ILDGPRMAELVINLFFICNVI. The Extracellular portion of the chain corresponds to 355-377; it reads RVLYSKVRESNNTSEAGLKKSVK. Residues Asn-365 and Asn-366 are each glycosylated (N-linked (GlcNAc...) asparagine). Residues 378–398 form a helical membrane-spanning segment; the sequence is AAMMLLPLLGVPNIMQTIPFA. Over 399–403 the chain is Cytoplasmic; that stretch reads PTRDN. A helical membrane pass occupies residues 404 to 424; it reads IMVFAVWTYTASFTYMYQGLM. At 425–546 the chain is on the extracellular side; sequence VASIYCFTNK…EGSNRSTKSP (122 aa). Asn-472 and Asn-476 each carry an N-linked (GlcNAc...) asparagine glycan. A disordered region spans residues 472 to 546; it reads NGTANASAPQ…EGSNRSTKSP (75 aa). The span at 473-485 shows a compositional bias: polar residues; that stretch reads GTANASAPQTNNA. The span at 500-520 shows a compositional bias: basic and acidic residues; it reads KGSDDSTTKLMKDAVMEEEKN. Asn-540 is a glycosylation site (N-linked (GlcNAc...) asparagine).

It belongs to the G-protein coupled receptor 2 family. In terms of tissue distribution, expression was observed in the mechanosensory neuron pairs PLM, ALM, FLP, OLQD, and OLQV, the chemosensory neurons PHA, PHB, RMEV, the ring motor neurons RMED, and the pharyngeal interneuron pair I1. Expression in sensory neurons PHA, PQR and URY are responsible for mate searching behavior. Expressed in AIY, RIM, RIA, and other neurons.

It localises to the cell membrane. In terms of biological role, G-protein coupled receptor for PDF neuropeptides. Plays a role in responses to environmental signals, including chemicals and touch, and in modulating locomotory behaviors. Capable of transducing signals via an adenylate cyclase acy-1 cAMP-dependent pathway. Required to regulate the sex-specific expression of TGFbeta-like daf-7 in the ASJ chemosensory neurons, perhaps acting via acy-1. Involved in modulating mate searching behavior independent of nutritional status. In the presence of food, plays a role in initiating and extending exploratory roaming behavior, perhaps acting in AIY, RIM, RIA, and other neurons, in opposition to 5-hydroxytryptamine (serotonin) signaling. Involved in mediating arousal from the sleep-like state called lethargus, which occurs during molting between larval and adult stages, in part by regulating touch sensitivity. May play a role in circadian rhythms of locomotor activity. Its function is as follows. G-protein coupled receptor which is activated by neuropeptides PDF-1 and PDF-2. Probably acts through the G-alpha(s) type of G proteins to elevate cAMP levels. G-protein coupled receptor which is activated by neuropeptides PDF-1 and PDF-2; however, activation is lower compared to isoforms a and b. Probably inhibits cAMP levels through the G-alpha(i/o) type of G proteins. This chain is Calcitonin receptor-like protein 1 (pdfr-1), found in Caenorhabditis elegans.